We begin with the raw amino-acid sequence, 218 residues long: Probable GTP-binding protein EngB (218 aa).

An EngB-type G domain is found at 23 to 200 (EVPEIAFVGR…AQLLWQWAHP (178 aa)). GTP-binding positions include 31 to 38 (GRSNAGKS), 58 to 62 (GRTQH), 80 to 83 (DLPG), 150 to 153 (TKAD), and 179 to 181 (FSA). S38 and T60 together coordinate Mg(2+).

It belongs to the TRAFAC class TrmE-Era-EngA-EngB-Septin-like GTPase superfamily. EngB GTPase family. Mg(2+) serves as cofactor.

In terms of biological role, necessary for normal cell division and for the maintenance of normal septation. This is Probable GTP-binding protein EngB from Acidovorax ebreus (strain TPSY) (Diaphorobacter sp. (strain TPSY)).